The following is a 967-amino-acid chain: Cytosolic carboxypeptidase 2 (967 aa).

In terms of domain architecture, Peptidase M14 spans 330 to 601; it reads YPYTYSDLQR…HFCDTLLDYC (272 aa). His396, Glu399, and His492 together coordinate Zn(2+). Glu565 serves as the catalytic Proton donor/acceptor. Disordered stretches follow at residues 679–706 and 944–967; these read KRRL…LHEA and PGIS…NTMK. Over residues 946 to 967 the composition is skewed to polar residues; the sequence is ISSSEPHFPNSSEDITVRNTMK.

It belongs to the peptidase M14 family. Requires Zn(2+) as cofactor.

The protein localises to the cytoplasm. Its subcellular location is the cytosol. It is found in the cytoskeleton. It localises to the microtubule organizing center. The protein resides in the centrosome. The protein localises to the centriole. Its subcellular location is the cilium basal body. It catalyses the reaction (L-glutamyl)(n+1)-gamma-L-glutamyl-L-glutamyl-[protein] + H2O = (L-glutamyl)(n)-gamma-L-glutamyl-L-glutamyl-[protein] + L-glutamate. Metallocarboxypeptidase that mediates deglutamylation of target proteins. Catalyzes the deglutamylation of polyglutamate side chains generated by post-translational polyglutamylation in proteins such as tubulins. Also removes gene-encoded polyglutamates from the carboxy-terminus of target proteins such as MYLK. Does not show detyrosinase or deglycylase activities from the carboxy-terminus of tubulin. Its function is as follows. Metallocarboxypeptidase that mediates deglutamylation of tubulin and non-tubulin target proteins. Catalyzes the removal of polyglutamate side chains present on the gamma-carboxyl group of glutamate residues within the C-terminal tail of tubulin protein. Specifically cleaves tubulin long-side-chains, while it is not able to remove the branching point glutamate. Also catalyzes the removal of polyglutamate residues from the carboxy-terminus of non-tubulin proteins. The polypeptide is Cytosolic carboxypeptidase 2 (agbl2) (Xenopus tropicalis (Western clawed frog)).